The following is a 483-amino-acid chain: Coagulation factor X isoform 1 (483 aa).

An N-terminal signal peptide occupies residues 1–20 (MAPQLLLCLILTFLWSLPEA). The propeptide occupies 21–40 (ESNVFLKSKVANRFLQRTKR). A Gla domain is found at 41 to 86 (ANSLFEEFKSGNIERECIEERCSKEEAREAFEDDEKTETFWNVYVD). 4-carboxyglutamate occurs at positions 46, 47, 54, 56, 59, 60, 65, 66, 69, 72, and 75. Cysteine 57 and cysteine 62 are joined by a disulfide. An EGF-like 1; calcium-binding domain is found at 86–122 (DGDQCSSNPCHYGGTCKDGIGSYTCTCLSGYEGKNCE). Disulfide bonds link cysteine 90-cysteine 101, cysteine 95-cysteine 110, cysteine 112-cysteine 121, cysteine 129-cysteine 140, cysteine 136-cysteine 149, cysteine 151-cysteine 164, cysteine 172-cysteine 345, cysteine 245-cysteine 250, cysteine 265-cysteine 281, cysteine 393-cysteine 407, and cysteine 418-cysteine 446. Serine 92 is a glycosylation site (O-linked (Hex...) serine). Aspartate 103 bears the (3R)-3-hydroxyaspartate mark. Positions 125-165 (LYKSCRVDNGDCWHFCKPVQNGIQCSCAESYLLGEDGHSCV) constitute an EGF-like 2 domain. The propeptide at 183–238 (EANLPDFQTDFSDDYDEIDENNFVETPTNFSGLVLTVQSQNATLLKKSDNPSPDIR) is activation peptide. In terms of domain architecture, Peptidase S1 spans 239–470 (VVNGTDCKLG…FILWIKRIIR (232 aa)). Histidine 280 functions as the Charge relay system in the catalytic mechanism. N-linked (GlcNAc...) asparagine glycosylation is present at asparagine 283. Residue aspartate 325 is the Charge relay system of the active site. Serine 422 acts as the Charge relay system in catalysis.

This sequence belongs to the peptidase S1 family. In terms of assembly, heterodimer of a light chain and a heavy chain; disulfide-linked. In terms of processing, gamma-carboxyglutamate residues are formed by vitamin K dependent carboxylation. These residues are essential for the binding of calcium. Post-translationally, the activation peptide is cleaved by factor IXa (in the intrinsic pathway), or by factor VIIa (in the extrinsic pathway). The iron and 2-oxoglutarate dependent 3-hydroxylation of aspartate and asparagine is (R) stereospecific within EGF domains. As to expression, plasma; synthesized in the liver.

Its subcellular location is the secreted. The catalysed reaction is Selective cleavage of Arg-|-Thr and then Arg-|-Ile bonds in prothrombin to form thrombin.. Its function is as follows. Factor Xa is a vitamin K-dependent glycoprotein that converts prothrombin to thrombin in the presence of factor Va, calcium and phospholipid during blood clotting. The chain is Coagulation factor X isoform 1 (F10) from Pseudonaja textilis (Eastern brown snake).